A 570-amino-acid polypeptide reads, in one-letter code: Periplasmic trehalase (570 aa).

Residues 1 to 34 (MIPPEIRRSVLLQKAIKLALAGTLLTFASFSATA) form the signal peptide. Residues Arg-159, 166 to 167 (WD), Asn-203, 212 to 214 (RSQ), 284 to 286 (RPE), and Gly-317 contribute to the substrate site. Active-site proton donor/acceptor residues include Asp-319 and Glu-503. A substrate-binding site is contributed by Glu-518. Residues 544-570 (KPCDSVPSTRPASLSATPTKTPSAATQ) are disordered. A compositionally biased stretch (low complexity) spans 554 to 570 (PASLSATPTKTPSAATQ).

This sequence belongs to the glycosyl hydrolase 37 family. In terms of assembly, monomer.

The protein resides in the periplasm. It carries out the reaction alpha,alpha-trehalose + H2O = alpha-D-glucose + beta-D-glucose. Its function is as follows. Provides the cells with the ability to utilize trehalose at high osmolarity by splitting it into glucose molecules that can subsequently be taken up by the phosphotransferase-mediated uptake system. In Salmonella dublin (strain CT_02021853), this protein is Periplasmic trehalase.